Here is a 132-residue protein sequence, read N- to C-terminus: Myelin P2 protein (132 aa).

The residue at position 2 (serine 2) is an N-acetylserine. Residues arginine 107 and 127–129 (RIY) contribute to the (9Z)-octadecenoate site. Residues arginine 107 and 127-129 (RIY) each bind hexadecanoate.

Belongs to the calycin superfamily. Fatty-acid binding protein (FABP) family. In terms of assembly, monomer.

It localises to the cytoplasm. In terms of biological role, may play a role in lipid transport protein in Schwann cells. May bind cholesterol. The polypeptide is Myelin P2 protein (Pmp2) (Mus musculus (Mouse)).